The primary structure comprises 232 residues: Enolase-phosphatase E1 (232 aa).

The protein belongs to the HAD-like hydrolase superfamily. MasA/MtnC family. As to quaternary structure, monomer. Mg(2+) is required as a cofactor.

It catalyses the reaction 5-methylsulfanyl-2,3-dioxopentyl phosphate + H2O = 1,2-dihydroxy-5-(methylsulfanyl)pent-1-en-3-one + phosphate. It participates in amino-acid biosynthesis; L-methionine biosynthesis via salvage pathway; L-methionine from S-methyl-5-thio-alpha-D-ribose 1-phosphate: step 3/6. Its pathway is amino-acid biosynthesis; L-methionine biosynthesis via salvage pathway; L-methionine from S-methyl-5-thio-alpha-D-ribose 1-phosphate: step 4/6. Functionally, bifunctional enzyme that catalyzes the enolization of 2,3-diketo-5-methylthiopentyl-1-phosphate (DK-MTP-1-P) into the intermediate 2-hydroxy-3-keto-5-methylthiopentenyl-1-phosphate (HK-MTPenyl-1-P), which is then dephosphorylated to form the acireductone 1,2-dihydroxy-3-keto-5-methylthiopentene (DHK-MTPene). The polypeptide is Enolase-phosphatase E1 (Sorangium cellulosum (strain So ce56) (Polyangium cellulosum (strain So ce56))).